We begin with the raw amino-acid sequence, 184 residues long: Large ribosomal subunit protein uL6 (184 aa).

The protein belongs to the universal ribosomal protein uL6 family. As to quaternary structure, part of the 50S ribosomal subunit.

This protein binds to the 23S rRNA, and is important in its secondary structure. It is located near the subunit interface in the base of the L7/L12 stalk, and near the tRNA binding site of the peptidyltransferase center. The chain is Large ribosomal subunit protein uL6 from Pseudothermotoga lettingae (strain ATCC BAA-301 / DSM 14385 / NBRC 107922 / TMO) (Thermotoga lettingae).